Consider the following 338-residue polypeptide: Holliday junction branch migration complex subunit RuvB (338 aa).

The tract at residues 1–181 (MEERILTQNF…FGVINRLDYY (181 aa)) is large ATPase domain (RuvB-L). Residues Leu20, Arg21, Gly62, Lys65, Thr66, Thr67, 128-130 (EDF), Arg171, Tyr181, and Arg218 contribute to the ATP site. Residue Thr66 participates in Mg(2+) binding. Residues 182–252 (SVEELKEIIK…TSKEALDVLG (71 aa)) form a small ATPAse domain (RuvB-S) region. The interval 255-338 (EIGLEYIDRK…YIEQGRIEGV (84 aa)) is head domain (RuvB-H). DNA contacts are provided by Arg310 and Arg315.

The protein belongs to the RuvB family. In terms of assembly, homohexamer. Forms an RuvA(8)-RuvB(12)-Holliday junction (HJ) complex. HJ DNA is sandwiched between 2 RuvA tetramers; dsDNA enters through RuvA and exits via RuvB. An RuvB hexamer assembles on each DNA strand where it exits the tetramer. Each RuvB hexamer is contacted by two RuvA subunits (via domain III) on 2 adjacent RuvB subunits; this complex drives branch migration. In the full resolvosome a probable DNA-RuvA(4)-RuvB(12)-RuvC(2) complex forms which resolves the HJ.

Its subcellular location is the cytoplasm. It catalyses the reaction ATP + H2O = ADP + phosphate + H(+). In terms of biological role, the RuvA-RuvB-RuvC complex processes Holliday junction (HJ) DNA during genetic recombination and DNA repair, while the RuvA-RuvB complex plays an important role in the rescue of blocked DNA replication forks via replication fork reversal (RFR). RuvA specifically binds to HJ cruciform DNA, conferring on it an open structure. The RuvB hexamer acts as an ATP-dependent pump, pulling dsDNA into and through the RuvAB complex. RuvB forms 2 homohexamers on either side of HJ DNA bound by 1 or 2 RuvA tetramers; 4 subunits per hexamer contact DNA at a time. Coordinated motions by a converter formed by DNA-disengaged RuvB subunits stimulates ATP hydrolysis and nucleotide exchange. Immobilization of the converter enables RuvB to convert the ATP-contained energy into a lever motion, pulling 2 nucleotides of DNA out of the RuvA tetramer per ATP hydrolyzed, thus driving DNA branch migration. The RuvB motors rotate together with the DNA substrate, which together with the progressing nucleotide cycle form the mechanistic basis for DNA recombination by continuous HJ branch migration. Branch migration allows RuvC to scan DNA until it finds its consensus sequence, where it cleaves and resolves cruciform DNA. The chain is Holliday junction branch migration complex subunit RuvB from Thermoanaerobacter pseudethanolicus (strain ATCC 33223 / 39E) (Clostridium thermohydrosulfuricum).